A 766-amino-acid chain; its full sequence is Protein sak1 (766 aa).

The segment at residues 101-176 (GICWLKRACE…YHYCGIKLRG (76 aa)) is a DNA-binding region (RFX-type winged-helix). Phosphoserine is present on residues Ser223, Ser224, and Ser227. Disordered regions lie at residues 271 to 308 (PQAHPLPSHLSQSNVPPQLSHSSVPSPAPPRSVSQPTY) and 708 to 731 (LQEHRQSQQHFQQDIEALQSQQQQ). Over residues 279-289 (HLSQSNVPPQL) the composition is skewed to polar residues. 2 stretches are compositionally biased toward low complexity: residues 290–308 (SHSSVPSPAPPRSVSQPTY) and 715–731 (QQHFQQDIEALQSQQQQ).

This sequence belongs to the RFX family.

It localises to the nucleus. In terms of biological role, positively regulates cyclic AMP-dependent protein kinase-mediated exit from the mitotic cell cycle. The protein is Protein sak1 (sak1) of Schizosaccharomyces pombe (strain 972 / ATCC 24843) (Fission yeast).